The following is a 1038-amino-acid chain: Eukaryotic translation initiation factor 3 subunit A (1038 aa).

Residues 92-121 (LKKFIELAEKKVTEAQAKADEIQSSLESAA) are a coiled coil. In terms of domain architecture, PCI spans 339 to 523 (MTKAVSFVLL…GVLTFDTDVF (185 aa)). A coiled-coil region spans residues 611 to 899 (IDKKKEAATD…QKQREEEAEA (289 aa)). 2 stretches are compositionally biased toward basic and acidic residues: residues 621-632 (ALQRKQREEETR) and 800-901 (RHEE…EARR). Disordered stretches follow at residues 621–641 (ALQR…QQLQ) and 800–1038 (RHEE…QQGQ). Composition is skewed to low complexity over residues 943-952 (KEAAGGAAPE) and 976-993 (GASA…AAPS). The span at 1002-1019 (DSGSSTPPSRTQTPATTS) shows a compositional bias: polar residues.

It belongs to the eIF-3 subunit A family. In terms of assembly, component of the eukaryotic translation initiation factor 3 (eIF-3) complex.

The protein resides in the cytoplasm. Functionally, RNA-binding component of the eukaryotic translation initiation factor 3 (eIF-3) complex, which is involved in protein synthesis of a specialized repertoire of mRNAs and, together with other initiation factors, stimulates binding of mRNA and methionyl-tRNAi to the 40S ribosome. The eIF-3 complex specifically targets and initiates translation of a subset of mRNAs involved in cell proliferation. In Aspergillus oryzae (strain ATCC 42149 / RIB 40) (Yellow koji mold), this protein is Eukaryotic translation initiation factor 3 subunit A (tif32).